The sequence spans 239 residues: Riboflavin synthase (239 aa).

Lumazine-binding repeat units follow at residues 1–105 and 106–205; these read MFTG…MGGH and VVQG…EKQI. Residues 4–6, 54–56, 70–75, 109–111, Lys145, 154–156, and 170–175 contribute to the 2,4-dihydroxypteridine site; these read GLV, CLT, GISPET, GHV, SLT, and SMVSYT.

As to quaternary structure, homotrimer.

It catalyses the reaction 2 6,7-dimethyl-8-(1-D-ribityl)lumazine + H(+) = 5-amino-6-(D-ribitylamino)uracil + riboflavin. It participates in cofactor biosynthesis; riboflavin biosynthesis; riboflavin from 2-hydroxy-3-oxobutyl phosphate and 5-amino-6-(D-ribitylamino)uracil: step 2/2. Functionally, catalyzes the dismutation of two molecules of 6,7-dimethyl-8-ribityllumazine, resulting in the formation of riboflavin and 5-amino-6-(D-ribitylamino)uracil. The protein is Riboflavin synthase (RIB5) of Meyerozyma guilliermondii (strain ATCC 6260 / CBS 566 / DSM 6381 / JCM 1539 / NBRC 10279 / NRRL Y-324) (Yeast).